The sequence spans 764 residues: Polyribonucleotide nucleotidyltransferase (764 aa).

Mg(2+) is bound by residues Asp-541 and Asp-547. The KH domain occupies 607–666; it reads PRVTAIKIPVDKIGEVIGPKGKVINQITEDTGANISIEDDGTVFVGATDGPSAQAAIDAI. Residues 678–747 enclose the S1 motif domain; that stretch reads GERFLGTVVK…NRGKISLVPV (70 aa).

The protein belongs to the polyribonucleotide nucleotidyltransferase family. Mg(2+) serves as cofactor.

Its subcellular location is the cytoplasm. It carries out the reaction RNA(n+1) + phosphate = RNA(n) + a ribonucleoside 5'-diphosphate. In terms of biological role, involved in mRNA degradation. Catalyzes the phosphorolysis of single-stranded polyribonucleotides processively in the 3'- to 5'-direction. The polypeptide is Polyribonucleotide nucleotidyltransferase (Nocardia farcinica (strain IFM 10152)).